The sequence spans 193 residues: ATP-dependent Clp protease proteolytic subunit (193 aa).

The active-site Nucleophile is Ser98. His123 is a catalytic residue.

It belongs to the peptidase S14 family. In terms of assembly, fourteen ClpP subunits assemble into 2 heptameric rings which stack back to back to give a disk-like structure with a central cavity, resembling the structure of eukaryotic proteasomes.

It localises to the cytoplasm. The catalysed reaction is Hydrolysis of proteins to small peptides in the presence of ATP and magnesium. alpha-casein is the usual test substrate. In the absence of ATP, only oligopeptides shorter than five residues are hydrolyzed (such as succinyl-Leu-Tyr-|-NHMec, and Leu-Tyr-Leu-|-Tyr-Trp, in which cleavage of the -Tyr-|-Leu- and -Tyr-|-Trp bonds also occurs).. Its function is as follows. Cleaves peptides in various proteins in a process that requires ATP hydrolysis. Has a chymotrypsin-like activity. Plays a major role in the degradation of misfolded proteins. In Pasteurella multocida (strain Pm70), this protein is ATP-dependent Clp protease proteolytic subunit.